The following is a 633-amino-acid chain: MHGLLLAGLLALPMNVLAHPAEQHASNVLSRRGVDIESFRLPLKAKYMDSDAAAQKIQAMSFSKDDDYVSTATKLVKSTFPKSTFRVVDDHYTGTNGIGHVHFKQTAHGLDIDNSDFNVNIDRDGKVFSFGNSFFTGEIPKENPMVKRAFSDPVKALKGAVKALNLPVKSDNAKAKTTAGKESFEFMGTTGALSAPKANLVYLQKEDGTLALTWRVETDVGDNWLLTYVDAHNSETVHNVVDYVASAEFKVFAWGLNDPTEGNPTSIRDPWTDSSPYTWHSDGMTKYPTTRGNNAIAQDNPTGGSTYINNYRPQSPNLIFNYPWSPTATPPSSYKDFSITQLFYTTNRFHDLLYSFGFNEAAGNFQVNNGNKGGRGNDFAIVNAQDGSGTNNANFATPPDGSPGRMRMYNWTTARPNRDGCLEAGIVIHEYAHGLSNRLCGGPANSGCLNALESGGMGEGWGDFYATAIRLKPRDTKDTNYSMGAWAANNPKGIRAYLYSTNLQTNPYMYTSVNSLREVHQIGTVWATMLYDLMWALIEAHGGTYSANPVFRNGVPQDGRHLAMKLVMDGMALQPCNPNFVQARDAILDADRALTNSANKCTIWKAFAKRGLGYGAKYDARNRTGSNRLPPGC.

Residues 1–18 form the signal peptide; sequence MHGLLLAGLLALPMNVLA. A propeptide spanning residues 19–246 is cleaved from the precursor; it reads HPAEQHASNV…VHNVVDYVAS (228 aa). Residue N410 is glycosylated (N-linked (GlcNAc...) asparagine). H429 is a binding site for Zn(2+). Residue E430 is part of the active site. H433 contributes to the Zn(2+) binding site. Residues N480 and N622 are each glycosylated (N-linked (GlcNAc...) asparagine).

It belongs to the peptidase M36 family. Zn(2+) is required as a cofactor.

Its subcellular location is the secreted. Its function is as follows. Secreted metalloproteinase probably acting as a virulence factor. This is Extracellular metalloproteinase 3 (MEP3) from Trichophyton equinum (Horse ringworm fungus).